The sequence spans 649 residues: Arylsulfatase (649 aa).

The signal sequence occupies residues 1 to 22; it reads MLQRLVVALCLLGFAALTAAAA. Ca(2+) contacts are provided by Asp-34 and Asp-35. A glycan (N-linked (GlcNAc...) asparagine) is linked at Asn-41. Cys-72 is a binding site for Ca(2+). Catalysis depends on Cys-72, which acts as the Nucleophile. A 3-oxoalanine (Cys) modification is found at Cys-72. Asn-89, Asn-224, and Asn-279 each carry an N-linked (GlcNAc...) asparagine glycan. Residues Asp-324 and Asn-325 each contribute to the Ca(2+) site. 3 N-linked (GlcNAc...) asparagine glycosylation sites follow: Asn-445, Asn-489, and Asn-531.

Belongs to the sulfatase family. Ca(2+) is required as a cofactor. In terms of processing, the conversion to 3-oxoalanine (also known as C-formylglycine, FGly), of a serine or cysteine residue in prokaryotes and of a cysteine residue in eukaryotes, is critical for catalytic activity.

The protein resides in the periplasm. It carries out the reaction an aryl sulfate + H2O = a phenol + sulfate + H(+). With respect to regulation, inhibited by Na(3)BO(3) and KCN. No inhibition by sodium dodecyl sulfate, even at high concentration. In terms of biological role, is commonly produced by soil microorganisms and plays an important role in the mineralization of sulfates. The protein is Arylsulfatase of Volvox carteri (Green alga).